A 1006-amino-acid polypeptide reads, in one-letter code: Kinesin-like protein KIN-5C (1006 aa).

The Kinesin motor domain occupies 9-355; that stretch reads NVQVLLRCRP…LDYAHRAKNI (347 aa). Residue 95 to 102 participates in ATP binding; it reads GQTGTGKT. The stretch at 371–522 forms a coiled coil; it reads IKDLYGEIER…NASLFQKIAR (152 aa).

Belongs to the TRAFAC class myosin-kinesin ATPase superfamily. Kinesin family. KIN-5/BimC subfamily.

It localises to the cytoplasm. It is found in the cytoskeleton. The protein localises to the spindle. Responsible for microtubule translocation. May be important for the organization of phragmoplast-specific arrays of microtubules. Plays an essential role in stabilizing the mitotic spindle. Required during mitotic cytokinesis. The sequence is that of Kinesin-like protein KIN-5C from Nicotiana tabacum (Common tobacco).